Consider the following 1001-residue polypeptide: Transcription-repair-coupling factor (1001 aa).

Residues 499–658 (DLSSHRVMDR…LSQIKGISSL (160 aa)) form the Helicase ATP-binding domain. 512 to 519 (GDVGFGKT) lines the ATP pocket. The DEEH box motif lies at 611 to 614 (DEEH). The 157-residue stretch at 679–835 (LLKEIIYREL…SIAYHDLEIR (157 aa)) folds into the Helicase C-terminal domain.

This sequence in the N-terminal section; belongs to the UvrB family. It in the C-terminal section; belongs to the helicase family. RecG subfamily.

It localises to the cytoplasm. Functionally, couples transcription and DNA repair by recognizing RNA polymerase (RNAP) stalled at DNA lesions. Mediates ATP-dependent release of RNAP and its truncated transcript from the DNA, and recruitment of nucleotide excision repair machinery to the damaged site. The chain is Transcription-repair-coupling factor from Helicobacter pylori (strain J99 / ATCC 700824) (Campylobacter pylori J99).